Reading from the N-terminus, the 781-residue chain is Mitochondrial inner membrane m-AAA protease component paraplegin (781 aa).

The transit peptide at 1–43 (MAAALLLLRGLRPGPEPRPRRLWGLLSGRGPGLSSGAGARRPY) directs the protein to the mitochondrion. Disordered regions lie at residues 22–56 (LWGL…AAAG) and 103–135 (TSRM…ERED). A compositionally biased stretch (low complexity) spans 36–56 (GAGARRPYAARGTPVGPAAAG). The propeptide at 44–105 (AARGTPVGPA…GSTLYFNTSR (62 aa)) is removed in mature form. At 106–144 (MKQKNKDNDKPKGKTPEDDEEEKRRKEREDQMYRERLRT) the chain is on the mitochondrial matrix side. Positions 109–135 (KNKDNDKPKGKTPEDDEEEKRRKERED) are enriched in basic and acidic residues. The helical transmembrane segment at 145–165 (LFIIALVMSLLNSLSTSGGSI) threads the bilayer. The Mitochondrial intermembrane segment spans residues 166 to 248 (SWADFVNEML…DRIPVSYKRT (83 aa)). The chain crosses the membrane as a helical span at residues 249–269 (GFFGNALYALGMTAVGLAILW). The Mitochondrial matrix segment spans residues 270-781 (YVFRLAGMTG…ASGEEEAPAP (512 aa)). ATP contacts are provided by A312, G352, C353, G354, K355, T356, and L357. Y505 carries the post-translational modification 3'-nitrotyrosine. H574 serves as a coordination point for Zn(2+). E575 is an active-site residue. H578 and D650 together coordinate Zn(2+). The tract at residues 701–781 (HEAKLLVAKA…ASGEEEAPAP (81 aa)) is interaction with PPIF.

It in the N-terminal section; belongs to the AAA ATPase family. In the C-terminal section; belongs to the peptidase M41 family. As to quaternary structure, forms heterohexamers with SPG7 and AFG3L1. The m-AAA protease is either composed of homohexamers of AFG3L2 or heterohexamers of AFG3L1, AFG3L2 and/or SPG7. Component of the mitochondrial permeability transition pore complex (mPTPC), at least composed of SPG7, VDAC1 and PPIF. Interacts with MAIP1. The cofactor is Zn(2+). Post-translationally, upon import into the mitochondrion, the N-terminal transit peptide is cleaved by the mitochondrial-processing peptidase (MPP) to generate an intermediate form which undergoes a second proteolytic cleavage mediated by proteases AFG3L1 and/or AFG3L2 removing an additional N-terminal fragment to generate the proteolytically active mature form. Expressed in the brain and retina (at protein level).

It is found in the mitochondrion inner membrane. The enzyme catalyses ATP + H2O = ADP + phosphate + H(+). In terms of biological role, catalytic component of the m-AAA protease, a protease that plays a key role in proteostasis of inner mitochondrial membrane proteins, and which is essential for axonal and neuron development. SPG7 possesses both ATPase and protease activities: the ATPase activity is required to unfold substrates, threading them into the internal proteolytic cavity for hydrolysis into small peptide fragments. The m-AAA protease exerts a dual role in the mitochondrial inner membrane: it mediates the processing of specific regulatory proteins and ensures protein quality control by degrading misfolded polypeptides. Mediates protein maturation of the mitochondrial ribosomal subunit MRPL32/bL32m by catalyzing the cleavage of the presequence of MRPL32/bL32m prior to assembly into the mitochondrial ribosome. Acts as a regulator of calcium in neurons by mediating degradation of SMDT1/EMRE before its assembly with the uniporter complex, limiting the availability of SMDT1/EMRE for MCU assembly and promoting efficient assembly of gatekeeper subunits with MCU. Also regulates mitochondrial calcium by catalyzing degradation of MCU. Plays a role in the formation and regulation of the mitochondrial permeability transition pore (mPTP) and its proteolytic activity is dispensable for this function. This Mus musculus (Mouse) protein is Mitochondrial inner membrane m-AAA protease component paraplegin.